A 212-amino-acid polypeptide reads, in one-letter code: ATP phosphoribosyltransferase 2 (212 aa).

This sequence belongs to the ATP phosphoribosyltransferase family. Short subfamily. As to quaternary structure, heteromultimer composed of HisG and HisZ subunits.

The protein resides in the cytoplasm. The catalysed reaction is 1-(5-phospho-beta-D-ribosyl)-ATP + diphosphate = 5-phospho-alpha-D-ribose 1-diphosphate + ATP. It participates in amino-acid biosynthesis; L-histidine biosynthesis; L-histidine from 5-phospho-alpha-D-ribose 1-diphosphate: step 1/9. Catalyzes the condensation of ATP and 5-phosphoribose 1-diphosphate to form N'-(5'-phosphoribosyl)-ATP (PR-ATP). Has a crucial role in the pathway because the rate of histidine biosynthesis seems to be controlled primarily by regulation of HisG enzymatic activity. This is ATP phosphoribosyltransferase 2 (hisG2) from Geobacter sulfurreducens (strain ATCC 51573 / DSM 12127 / PCA).